The sequence spans 902 residues: 4-hydroxyphenylacetate decarboxylase glycyl radical subunit (902 aa).

Residues 38 to 774 (KRAEDLLDVY…ATLATPDGRL (737 aa)) enclose the PFL domain. 4-hydroxyphenylacetate is bound by residues Ser348 and Cys507. The Cysteine radical intermediate role is filled by Cys507. Glu509 (proton donor) is an active-site residue. 2 residues coordinate 4-hydroxyphenylacetate: His540 and Glu641. The 121-residue stretch at 782–902 (GSVSAYAGTD…VIARTEYEGV (121 aa)) folds into the Glycine radical domain. Gly877 carries the post-translational modification Glycine radical.

This sequence belongs to the glycyl radical enzyme (GRE) family. HPAD subfamily. Heterooctamer consisting of 4 large (HpdB) subunits and 4 small (HpdC) subunits, arranged as a tetramer of heterodimers. Also forms a catalytically inactive homodimer. In terms of processing, requires the activating protein CsdA to generate the key active site glycyl radical that is involved in catalysis. Phosphorylated on serine. Phosphorylation may trigger the formation of the active heterooctamers and thereby regulates enzyme activity.

It catalyses the reaction 4-hydroxyphenylacetate + H(+) = 4-methylphenol + CO2. The catalysed reaction is 3,4-dihydroxyphenylacetate + H(+) = 4-methylcatechol + CO2. In terms of biological role, glycyl radical subunit of the HPA decarboxylase that decarboxylates phenylacetates with a hydroxyl group in the p-position. Active toward 4-hydroxyphenylacetate and 3,4-dihydroxyphenylacetate, forming 4-methylphenol and 4-methylcatechol, respectively. Is likely involved in the catabolism of aromatic amino acids such as tyrosine fermentation. 4-methylphenol (p-cresol) formation provides metabolic toxicity, which allows an active suppression of other microbes and may provide growth advantages for the producers in highly competitive environments. The large subunit is the catalytic subunit that binds the substrate. The chain is 4-hydroxyphenylacetate decarboxylase glycyl radical subunit from Clostridioides difficile (strain 630) (Peptoclostridium difficile).